The chain runs to 307 residues: Serine/threonine-protein phosphatase 4 catalytic subunit (307 aa).

The residue at position 2 (Ala2) is an N-acetylalanine. Mn(2+) is bound by residues Asp54, His56, Asp82, and Asn114. The active-site Proton donor is the His115. Mn(2+) contacts are provided by His164 and His238. Leu307 is modified (leucine methyl ester).

It belongs to the PPP phosphatase family. PP-4 (PP-X) subfamily. In terms of assembly, serine/threonine-protein phosphatase 4 (PP4) occurs in different assemblies of the catalytic and one or more regulatory subunits. Component of the PP4 complexes PPP4C-PPP4R1, PPP4C-PPP4R2, PPP4C-PPP4R2-PPP4R3A, PPP4C-PPP4R2-PPP4R3B and PPP4C-PPP4R4. The PPP4C-PPP4R2 complex appears to be a tetramer composed of 2 molecules of PPP4C and 2 molecules of PPP4R2. Interacts with REL, NFKB1/p50 and RELA. Interacts with SMN1 and GEMIN4. Interacts with IRS4 (phosphorylated). Interacts with SMEK1/PPP4R3A; the interaction requires PP4R2. Interacts with HDAC3. Requires Mn(2+) as cofactor. In terms of processing, methylation at the C-terminal Leu-307 is critical for interactions with regulatory subunits and functions in DNA repair.

It localises to the cytoplasm. The protein localises to the nucleus. The protein resides in the cytoskeleton. It is found in the microtubule organizing center. Its subcellular location is the centrosome. The catalysed reaction is O-phospho-L-seryl-[protein] + H2O = L-seryl-[protein] + phosphate. It carries out the reaction O-phospho-L-threonyl-[protein] + H2O = L-threonyl-[protein] + phosphate. Protein phosphatase that is involved in many processes such as microtubule organization at centrosomes, maturation of spliceosomal snRNPs, apoptosis, DNA repair, tumor necrosis factor (TNF)-alpha signaling, activation of c-Jun N-terminal kinase MAPK8, regulation of histone acetylation, DNA damage checkpoint signaling, NF-kappa-B activation and cell migration. The PPP4C-PPP4R1 PP4 complex may play a role in dephosphorylation and regulation of HDAC3. The PPP4C-PPP4R2-PPP4R3A PP4 complex specifically dephosphorylates H2AX phosphorylated on Ser-140 (gamma-H2AX) generated during DNA replication and required for DNA DSB repair. Dephosphorylates NDEL1 at CDK1 phosphorylation sites and negatively regulates CDK1 activity in interphase. In response to DNA damage, catalyzes RPA2 dephosphorylation, an essential step for DNA repair since it allows the efficient RPA2-mediated recruitment of RAD51 to chromatin. The polypeptide is Serine/threonine-protein phosphatase 4 catalytic subunit (Ppp4c) (Rattus norvegicus (Rat)).